Consider the following 1135-residue polypeptide: Nonribosomal peptide synthetase 9 (1135 aa).

The condensation 1 stretch occupies residues threonine 23–proline 77. An adenylation region spans residues serine 177 to threonine 562. The tract at residues glycine 485–serine 507 is disordered. Residues glycine 491 to arginine 502 show a composition bias toward low complexity. The region spanning alanine 672–glutamine 748 is the Carrier domain. Residue serine 709 is modified to O-(pantetheine 4'-phosphoryl)serine. Residues aspartate 746–valine 999 are condensation 2.

It belongs to the NRP synthetase family.

In terms of biological role, nonribosomal peptide synthesis (NRPS) is a key mechanism responsible for the biosynthesis of bioactive metabolites which are potentially contributing to organismal virulence. This chain is Nonribosomal peptide synthetase 9 (NRPS9), found in Aspergillus fumigatus (strain ATCC MYA-4609 / CBS 101355 / FGSC A1100 / Af293) (Neosartorya fumigata).